A 333-amino-acid chain; its full sequence is Secreted mono- and diacylglycerol lipase 1 (333 aa).

The N-terminal stretch at 1–16 (MMLILSILSIIAFAAA) is a signal peptide. Disulfide bonds link cysteine 56/cysteine 268 and cysteine 276/cysteine 298. The Nucleophile role is filled by serine 176. Catalysis depends on residues aspartate 230 and histidine 288.

This sequence belongs to the AB hydrolase superfamily. Lipase family. Class 3 subfamily.

Its subcellular location is the secreted. It catalyses the reaction a monoacylglycerol + H2O = glycerol + a fatty acid + H(+). It carries out the reaction a diacylglycerol + H2O = a monoacylglycerol + a fatty acid + H(+). In terms of biological role, secreted mono- and diacylglycerol lipase that allows the use of hydrolyzed lipids as carbon source and might play a role in pathogenicity. Shows lipolytic activity towards olive oil and p-nitrophenylpalmitate. In Fusarium solani (Filamentous fungus), this protein is Secreted mono- and diacylglycerol lipase 1.